A 208-amino-acid chain; its full sequence is dITP/XTP pyrophosphatase (208 aa).

Substrate is bound at residue 16-21 (TGNAGK). Positions 46 and 75 each coordinate Mg(2+). Catalysis depends on Asp75, which acts as the Proton acceptor. Residues Ser76, 155-158 (FGYD), Lys178, and 183-184 (HR) each bind substrate.

It belongs to the HAM1 NTPase family. Homodimer. Mg(2+) serves as cofactor.

The catalysed reaction is XTP + H2O = XMP + diphosphate + H(+). It carries out the reaction dITP + H2O = dIMP + diphosphate + H(+). The enzyme catalyses ITP + H2O = IMP + diphosphate + H(+). In terms of biological role, pyrophosphatase that catalyzes the hydrolysis of nucleoside triphosphates to their monophosphate derivatives, with a high preference for the non-canonical purine nucleotides XTP (xanthosine triphosphate), dITP (deoxyinosine triphosphate) and ITP. Seems to function as a house-cleaning enzyme that removes non-canonical purine nucleotides from the nucleotide pool, thus preventing their incorporation into DNA/RNA and avoiding chromosomal lesions. This chain is dITP/XTP pyrophosphatase, found in Deinococcus deserti (strain DSM 17065 / CIP 109153 / LMG 22923 / VCD115).